A 327-amino-acid polypeptide reads, in one-letter code: Zinc finger protein 444 (327 aa).

N-acetylmethionine is present on methionine 1. Lysine 8 is covalently cross-linked (Glycyl lysine isopeptide (Lys-Gly) (interchain with G-Cter in SUMO2)). Residues serine 18 and serine 104 each carry the phosphoserine modification. In terms of domain architecture, SCAN box spans 20-104; the sequence is WHRFRRFHLG…LEELWGPAAS (85 aa). Residues 101 to 171 form a disordered region; it reads PAASPDGSSA…SPPLAPGLPA (71 aa). The segment covering 106 to 118 has biased composition (polar residues); that stretch reads DGSSATRVPQDVT. Residues 134-148 show a composition bias toward low complexity; the sequence is PLAGTAPGAEGPAPG. 2 C2H2-type zinc fingers span residues 179–201 and 207–229; these read TSCP…RQSH and HACP…RDTH. Lysine 190 participates in a covalent cross-link: Glycyl lysine isopeptide (Lys-Gly) (interchain with G-Cter in SUMO2). The disordered stretch occupies residues 220 to 243; it reads EHLRRHRDTHPGSPGSPGPALRPL. Position 235 is a phosphoserine (serine 235). 2 C2H2-type zinc fingers span residues 250-272 and 278-300; these read HACC…RKTH and FACW…QRIH. Residues 305 to 314 are compositionally biased toward low complexity; sequence ASAQGAVAPG. Positions 305–327 are disordered; it reads ASAQGAVAPGPDGGGPFPPWPLG.

This sequence belongs to the krueppel C2H2-type zinc-finger protein family.

The protein resides in the nucleus. Transcriptional regulator. Binds to the 5'-flanking critical region of the SCARF1 promoter. The polypeptide is Zinc finger protein 444 (ZNF444) (Homo sapiens (Human)).